A 328-amino-acid polypeptide reads, in one-letter code: DNA-directed RNA polymerase subunit alpha (328 aa).

Residues 1-231 (MQTNLLKPKA…EQLAVFAQLE (231 aa)) form an alpha N-terminal domain (alpha-NTD) region. An alpha C-terminal domain (alpha-CTD) region spans residues 248-328 (FDPILLRPVD…NWPPQGLDKR (81 aa)).

This sequence belongs to the RNA polymerase alpha chain family. In terms of assembly, homodimer. The RNAP catalytic core consists of 2 alpha, 1 beta, 1 beta' and 1 omega subunit. When a sigma factor is associated with the core the holoenzyme is formed, which can initiate transcription.

It catalyses the reaction RNA(n) + a ribonucleoside 5'-triphosphate = RNA(n+1) + diphosphate. DNA-dependent RNA polymerase catalyzes the transcription of DNA into RNA using the four ribonucleoside triphosphates as substrates. In Leptothrix cholodnii (strain ATCC 51168 / LMG 8142 / SP-6) (Leptothrix discophora (strain SP-6)), this protein is DNA-directed RNA polymerase subunit alpha.